A 441-amino-acid polypeptide reads, in one-letter code: Serine/threonine-protein phosphatase 2A activator 1 (441 aa).

2 stretches are compositionally biased toward polar residues: residues 66–75 and 421–432; these read NIPPSNTTHS and QRQDDLNSTTYR. 2 disordered regions span residues 66–100 and 421–441; these read NIPP…SSNQ and QRQD…LGRN.

The protein belongs to the PTPA-type PPIase family.

The protein resides in the cytoplasm. The protein localises to the nucleus. It catalyses the reaction [protein]-peptidylproline (omega=180) = [protein]-peptidylproline (omega=0). Functionally, PPIases accelerate the folding of proteins. It catalyzes the cis-trans isomerization of proline imidic peptide bonds in oligopeptides. Acts as a regulatory subunit for PP2A-like phosphatases modulating their activity or substrate specificity, probably by inducing a conformational change in the catalytic subunit, a direct target of the PPIase. Can reactivate inactive phosphatase PP2A-phosphatase methylesterase complexes (PP2Ai) in presence of ATP and Mg(2+) by dissociating the inactive form from the complex. This chain is Serine/threonine-protein phosphatase 2A activator 1 (RRD1), found in Debaryomyces hansenii (strain ATCC 36239 / CBS 767 / BCRC 21394 / JCM 1990 / NBRC 0083 / IGC 2968) (Yeast).